A 293-amino-acid polypeptide reads, in one-letter code: Neugrin (293 aa).

The N-terminal stretch at 1–18 (MALSLSLFLGGRVRTSLA) is a signal peptide. A Phosphoserine modification is found at Ser-41. Disordered regions lie at residues 177-210 (DEVSSKSQNHSTALKVAKSHPHSTDAQKKREGRD) and 224-254 (TTALGHQRELQKSATSDSEATGRAGSDTLPS). N-linked (GlcNAc...) asparagine glycosylation occurs at Asn-185. The segment covering 198–210 (HSTDAQKKREGRD) has biased composition (basic and acidic residues).

Belongs to the neugrin family. Forms a regulatory protein-RNA complex, consisting of RCC1L, NGRN, RPUSD3, RPUSD4, TRUB2, FASTKD2 and 16S mt-rRNA. Interacts with 16S mt-rRNA; this interaction is direct. Expressed in heart, brain, liver and kidney. In brain, mainly expressed in neurons rather than glial cells.

The protein localises to the nucleus. It localises to the secreted. The protein resides in the mitochondrion membrane. In terms of biological role, plays an essential role in mitochondrial ribosome biogenesis. As a component of a functional protein-RNA module, consisting of RCC1L, NGRN, RPUSD3, RPUSD4, TRUB2, FASTKD2 and 16S mitochondrial ribosomal RNA (16S mt-rRNA), controls 16S mt-rRNA abundance and is required for intra-mitochondrial translation of core subunits of the oxidative phosphorylation system. This chain is Neugrin (Ngrn), found in Mus musculus (Mouse).